The primary structure comprises 1170 residues: Error-prone DNA polymerase (1170 aa).

Disordered regions lie at residues 867–899 (RGAR…LHND) and 1129–1170 (IPHG…RDFH). The span at 886–899 (PRNDNDRQIPLHND) shows a compositional bias: basic and acidic residues.

Belongs to the DNA polymerase type-C family. DnaE2 subfamily.

Its subcellular location is the cytoplasm. It catalyses the reaction DNA(n) + a 2'-deoxyribonucleoside 5'-triphosphate = DNA(n+1) + diphosphate. Functionally, DNA polymerase involved in damage-induced mutagenesis and translesion synthesis (TLS). It is not the major replicative DNA polymerase. This is Error-prone DNA polymerase from Bradyrhizobium sp. (strain ORS 278).